The chain runs to 99 residues: MALTKAEMAEKLFDEVGLNKREAKEFVDAFFDVLREALEQGRQVKLSGFGNFDLRRKNQRPGRNPKTGEEIPISARTVVTFRPGQKLKERVEAYAGSGQ.

It belongs to the bacterial histone-like protein family. As to quaternary structure, heterodimer of an alpha and a beta chain.

Functionally, this protein is one of the two subunits of integration host factor, a specific DNA-binding protein that functions in genetic recombination as well as in transcriptional and translational control. The polypeptide is Integration host factor subunit alpha (Stenotrophomonas maltophilia (strain R551-3)).